The sequence spans 360 residues: Peptide chain release factor 1 (360 aa).

Q236 carries the N5-methylglutamine modification.

It belongs to the prokaryotic/mitochondrial release factor family. Methylated by PrmC. Methylation increases the termination efficiency of RF1.

The protein localises to the cytoplasm. In terms of biological role, peptide chain release factor 1 directs the termination of translation in response to the peptide chain termination codons UAG and UAA. The sequence is that of Peptide chain release factor 1 from Limosilactobacillus reuteri subsp. reuteri (strain JCM 1112) (Lactobacillus reuteri).